A 144-amino-acid polypeptide reads, in one-letter code: Prefoldin subunit alpha (144 aa).

The protein belongs to the prefoldin subunit alpha family. As to quaternary structure, heterohexamer of two alpha and four beta subunits.

It is found in the cytoplasm. Functionally, molecular chaperone capable of stabilizing a range of proteins. Seems to fulfill an ATP-independent, HSP70-like function in archaeal de novo protein folding. In Methanosarcina barkeri (strain Fusaro / DSM 804), this protein is Prefoldin subunit alpha.